The following is a 225-amino-acid chain: Transcription factor MYB1 (225 aa).

2 HTH myb-type domains span residues 11-67 (LGRV…KPSI) and 68-118 (KRGH…YKKH). 2 DNA-binding regions (H-T-H motif) span residues 39-63 (WKRVPERAGLNRCRKSCRWRWLNYL) and 91-114 (WSLIAAKLPGRTINDVKNYCNTHL).

As to quaternary structure, no interactions with bHLH.

Its subcellular location is the nucleus. In terms of biological role, activates DODA1 and CYP76AD1 in the betalain red pigment pathway. In Beta vulgaris (Sugar beet), this protein is Transcription factor MYB1.